Reading from the N-terminus, the 436-residue chain is Na(+)/H(+) antiporter NhaA 1 (436 aa).

11 consecutive transmembrane segments (helical) span residues 35-55 (FGGG…NSPW), 80-100 (LATW…GLEL), 116-136 (ALPV…YVGV), 147-167 (GWAI…AVIG), 176-196 (AFLL…IAIF), 201-221 (FKLT…LLVQ), 226-246 (WWWA…ESGV), 283-303 (VSAG…SLRG), 313-333 (PIVV…IFGS), 354-374 (LLGV…IGEL), and 385-405 (VKAA…IVLI).

Belongs to the NhaA Na(+)/H(+) (TC 2.A.33) antiporter family.

The protein localises to the cell membrane. It carries out the reaction Na(+)(in) + 2 H(+)(out) = Na(+)(out) + 2 H(+)(in). In terms of biological role, na(+)/H(+) antiporter that extrudes sodium in exchange for external protons. The polypeptide is Na(+)/H(+) antiporter NhaA 1 (Salinispora tropica (strain ATCC BAA-916 / DSM 44818 / JCM 13857 / NBRC 105044 / CNB-440)).